The sequence spans 142 residues: Hemoglobin subunit beta-C (142 aa).

The Globin domain occupies 1–142 (MPNKALITGF…VASALAHRYH (142 aa)). Positions 59 and 88 each coordinate heme b.

The protein belongs to the globin family. Heterotetramer of two alpha chains and two beta chains. In terms of tissue distribution, red blood cells.

Involved in oxygen transport from the lung to the various peripheral tissues. This is Hemoglobin subunit beta-C (HBBC) from Capra hircus (Goat).